The primary structure comprises 117 residues: Eukaryotic translation initiation factor 4E-binding protein 1 (117 aa).

2 stretches are compositionally biased toward polar residues: residues 1–12 (MSAGSSCSQTPS) and 33–47 (YSTTPGGTLFSTTPG). Residues 1 to 47 (MSAGSSCSQTPSRAIPTRRVALGDGVQLPPGDYSTTPGGTLFSTTPG) form a disordered region. Residue Ser2 is modified to N-acetylserine. Thr36 and Thr40 each carry phosphothreonine. Position 43 is a phosphoserine (Ser43). Thr45 carries the post-translational modification Phosphothreonine; by MTOR. Thr49 is subject to Phosphothreonine. Tyr53 carries the phosphotyrosine modification. The short motif at 53-59 (YDRKFLM) is the YXXXXLphi motif element. Lys56 participates in a covalent cross-link: Glycyl lysine isopeptide (Lys-Gly) (interchain with G-Cter in ubiquitin). Phosphoserine; by DYRK2, MAPK1, MAPK3 and MTOR is present on Ser64. The disordered stretch occupies residues 64–117 (SPVAKTPPKDLPTIPGVTSPTSDEPPMQASQSHLHSSPEDKRAGGEESQFEMDI). Residue Thr69 is modified to Phosphothreonine; by MTOR. A Phosphothreonine modification is found at Thr76. A compositionally biased stretch (polar residues) spans 79 to 98 (GVTSPTSDEPPMQASQSHLH). 3 positions are modified to phosphoserine: Ser82, Ser95, and Ser99. The segment covering 99 to 108 (SSPEDKRAGG) has biased composition (basic and acidic residues). Ser100 carries the phosphoserine; by DYRK2 modification. The residue at position 111 (Ser111) is a Phosphoserine. A TOS motif motif is present at residues 113–117 (FEMDI).

This sequence belongs to the eIF4E-binding protein family. In terms of assembly, hypophosphorylated EIF4EBP1 competes with EIF4G1/EIF4G3 to interact with EIF4E; insulin stimulated MAP-kinase (MAPK1 and MAPK3) or mTORC1 phosphorylation of EIF4EBP1 causes dissociation of the complex allowing EIF4G1/EIF4G3 to bind and consequent initiation of translation. Interacts (via TOS motif) with RPTOR; promoting phosphorylation by mTORC1. Post-translationally, phosphorylated on serine and threonine residues in response to insulin, EGF and PDGF. Phosphorylation at Thr-36, Thr-45, Ser-64 and Thr-69, corresponding to the hyperphosphorylated form, is regulated by mTORC1 and abolishes binding to EIF4E. Ubiquitinated: when eIF4E levels are low, hypophosphorylated form is ubiquitinated by the BCR(KLHL25) complex, leading to its degradation and serving as a homeostatic mechanism to maintain translation and prevent eIF4E inhibition when eIF4E levels are low. Not ubiquitinated when hyperphosphorylated (at Thr-36, Thr-45, Ser-64 and Thr-69) or associated with eIF4E. Expressed in all tissues examined; highest levels in fat and skeletal tissue, lowest levels in kidney.

Its subcellular location is the cytoplasm. It is found in the nucleus. Functionally, repressor of translation initiation that regulates EIF4E activity by preventing its assembly into the eIF4F complex: hypophosphorylated form competes with EIF4G1/EIF4G3 and strongly binds to EIF4E, leading to repress translation. In contrast, hyperphosphorylated form dissociates from EIF4E, allowing interaction between EIF4G1/EIF4G3 and EIF4E, leading to initiation of translation. Mediates the regulation of protein translation by hormones, growth factors and other stimuli that signal through the MAP kinase and mTORC1 pathways. The sequence is that of Eukaryotic translation initiation factor 4E-binding protein 1 (Eif4ebp1) from Rattus norvegicus (Rat).